A 288-amino-acid chain; its full sequence is Quinate/shikimate dehydrogenase (288 aa).

Positions 71 and 107 each coordinate substrate. NAD(+) is bound by residues 132–135 (AGGA), 155–158 (NRRD), lysine 205, 232–235 (CVYN), and glycine 255.

This sequence belongs to the shikimate dehydrogenase family. As to quaternary structure, homodimer.

The enzyme catalyses L-quinate + NAD(+) = 3-dehydroquinate + NADH + H(+). It carries out the reaction L-quinate + NADP(+) = 3-dehydroquinate + NADPH + H(+). The catalysed reaction is shikimate + NADP(+) = 3-dehydroshikimate + NADPH + H(+). It catalyses the reaction shikimate + NAD(+) = 3-dehydroshikimate + NADH + H(+). The protein operates within metabolic intermediate biosynthesis; chorismate biosynthesis; chorismate from D-erythrose 4-phosphate and phosphoenolpyruvate: step 4/7. The actual biological function of YdiB remains unclear, nor is it known whether 3-dehydroshikimate or quinate represents the natural substrate. Catalyzes the reversible NAD-dependent reduction of both 3-dehydroshikimate (DHSA) and 3-dehydroquinate to yield shikimate (SA) and quinate, respectively. It can use both NAD or NADP for catalysis, however it has higher catalytic efficiency with NAD. This Shigella sonnei (strain Ss046) protein is Quinate/shikimate dehydrogenase.